We begin with the raw amino-acid sequence, 580 residues long: Acyl-coenzyme A synthetase ACSM3, mitochondrial (580 aa).

Residues 1 to 21 constitute a mitochondrion transit peptide; sequence MAMLLRARCFHRLAIPDPRRI. 2 positions are modified to N6-succinyllysine: Lys67 and Lys100. Lys151 carries the N6-acetyllysine modification. ATP is bound by residues 229–237, 368–373, Asp455, Arg470, and Lys566; these read TSGTTGPPK and EGYGQT.

It belongs to the ATP-dependent AMP-binding enzyme family. Requires Mg(2+) as cofactor. Mn(2+) serves as cofactor.

The protein resides in the mitochondrion. It localises to the mitochondrion matrix. It catalyses the reaction a medium-chain fatty acid + ATP + CoA = a medium-chain fatty acyl-CoA + AMP + diphosphate. It carries out the reaction propanoate + ATP + CoA = propanoyl-CoA + AMP + diphosphate. The enzyme catalyses butanoate + ATP + CoA = butanoyl-CoA + AMP + diphosphate. The catalysed reaction is 2-methylpropanoate + ATP + CoA = 2-methylpropanoyl-CoA + AMP + diphosphate. It catalyses the reaction 2-methylbutanoate + ATP + CoA = 2-methylbutanoyl-CoA + AMP + diphosphate. It carries out the reaction octanoate + ATP + CoA = octanoyl-CoA + AMP + diphosphate. Catalyzes the activation of fatty acids by CoA to produce an acyl-CoA, the first step in fatty acid metabolism. Capable of activating medium-chain fatty acids with a preference for isobutyrate among fatty acids with 2-6 carbon atoms. The protein is Acyl-coenzyme A synthetase ACSM3, mitochondrial (Acsm3) of Rattus norvegicus (Rat).